The following is a 110-amino-acid chain: Large ribosomal subunit protein uL22 (110 aa).

The protein belongs to the universal ribosomal protein uL22 family. As to quaternary structure, part of the 50S ribosomal subunit.

Its function is as follows. This protein binds specifically to 23S rRNA; its binding is stimulated by other ribosomal proteins, e.g. L4, L17, and L20. It is important during the early stages of 50S assembly. It makes multiple contacts with different domains of the 23S rRNA in the assembled 50S subunit and ribosome. Functionally, the globular domain of the protein is located near the polypeptide exit tunnel on the outside of the subunit, while an extended beta-hairpin is found that lines the wall of the exit tunnel in the center of the 70S ribosome. This is Large ribosomal subunit protein uL22 from Shewanella halifaxensis (strain HAW-EB4).